The sequence spans 427 residues: 3-phosphoshikimate 1-carboxyvinyltransferase (427 aa).

3-phosphoshikimate-binding residues include Lys22, Ser23, and Arg27. Lys22 contacts phosphoenolpyruvate. Residues Gly96 and Arg124 each contribute to the phosphoenolpyruvate site. 3-phosphoshikimate is bound by residues Ser169, Ser170, Gln171, Ser197, Asp313, Asn336, and Lys340. Position 171 (Gln171) interacts with phosphoenolpyruvate. The active-site Proton acceptor is the Asp313. Arg344, Arg386, and Lys411 together coordinate phosphoenolpyruvate.

Belongs to the EPSP synthase family. In terms of assembly, monomer.

It localises to the cytoplasm. The catalysed reaction is 3-phosphoshikimate + phosphoenolpyruvate = 5-O-(1-carboxyvinyl)-3-phosphoshikimate + phosphate. It participates in metabolic intermediate biosynthesis; chorismate biosynthesis; chorismate from D-erythrose 4-phosphate and phosphoenolpyruvate: step 6/7. Functionally, catalyzes the transfer of the enolpyruvyl moiety of phosphoenolpyruvate (PEP) to the 5-hydroxyl of shikimate-3-phosphate (S3P) to produce enolpyruvyl shikimate-3-phosphate and inorganic phosphate. The protein is 3-phosphoshikimate 1-carboxyvinyltransferase of Escherichia coli O1:K1 / APEC.